The chain runs to 86 residues: Exodeoxyribonuclease 7 small subunit (86 aa).

It belongs to the XseB family. As to quaternary structure, heterooligomer composed of large and small subunits.

The protein localises to the cytoplasm. The enzyme catalyses Exonucleolytic cleavage in either 5'- to 3'- or 3'- to 5'-direction to yield nucleoside 5'-phosphates.. Bidirectionally degrades single-stranded DNA into large acid-insoluble oligonucleotides, which are then degraded further into small acid-soluble oligonucleotides. The sequence is that of Exodeoxyribonuclease 7 small subunit from Bacillus licheniformis (strain ATCC 14580 / DSM 13 / JCM 2505 / CCUG 7422 / NBRC 12200 / NCIMB 9375 / NCTC 10341 / NRRL NRS-1264 / Gibson 46).